Reading from the N-terminus, the 90-residue chain is U7-theraphotoxin-Hhn1h (90 aa).

The first 19 residues, 1–19 (MKTAIFTVVLALAVFAVLS), serve as a signal peptide directing secretion. A propeptide spanning residues 20–50 (FGWEANEKALSEEFTELIHEKEAASETEARE) is cleaved from the precursor. Intrachain disulfides connect Cys51–Cys65, Cys58–Cys70, and Cys64–Cys81.

This sequence belongs to the neurotoxin 10 (Hwtx-1) family. 13 (Hntx-13) subfamily. Expressed by the venom gland.

Its subcellular location is the secreted. In terms of biological role, ion channel inhibitor. The polypeptide is U7-theraphotoxin-Hhn1h (Cyriopagopus hainanus (Chinese bird spider)).